Here is a 598-residue protein sequence, read N- to C-terminus: Elongation factor 4 (598 aa).

The region spanning K2–E184 is the tr-type G domain. Residues D14–T19 and N131–D134 contribute to the GTP site.

The protein belongs to the TRAFAC class translation factor GTPase superfamily. Classic translation factor GTPase family. LepA subfamily.

The protein resides in the cell inner membrane. The enzyme catalyses GTP + H2O = GDP + phosphate + H(+). Functionally, required for accurate and efficient protein synthesis under certain stress conditions. May act as a fidelity factor of the translation reaction, by catalyzing a one-codon backward translocation of tRNAs on improperly translocated ribosomes. Back-translocation proceeds from a post-translocation (POST) complex to a pre-translocation (PRE) complex, thus giving elongation factor G a second chance to translocate the tRNAs correctly. Binds to ribosomes in a GTP-dependent manner. In Haemophilus influenzae (strain ATCC 51907 / DSM 11121 / KW20 / Rd), this protein is Elongation factor 4.